We begin with the raw amino-acid sequence, 422 residues long: Acetyl-CoA acetyltransferase, mitochondrial (422 aa).

The transit peptide at 1–28 (MPVLAALLRRGPLLQRRVQEIRYAERSY) directs the protein to the mitochondrion. Lys61 is subject to N6-acetyllysine; alternate. Lys61 bears the N6-succinyllysine; alternate mark. Position 73 is an N6-succinyllysine (Lys73). The active-site Acyl-thioester intermediate is the Cys121. Residues Lys169, Lys176, Lys185, and Lys197 each carry the N6-acetyllysine; alternate modification. Lys169, Lys176, Lys185, and Lys197 each carry N6-succinyllysine; alternate. Tyr214 lines the CoA pocket. A K(+)-binding site is contributed by Tyr214. An N6-acetyllysine; alternate modification is found at Lys218. Lys218 carries the post-translational modification N6-succinyllysine; alternate. Lys238 is subject to N6-succinyllysine. An N6-acetyllysine; alternate modification is found at Lys240. Lys240 carries the N6-succinyllysine; alternate modification. An N6-acetyllysine mark is found at Lys246 and Lys252. CoA-binding positions include 253–255 (RVD) and Lys258. Lys258 carries the post-translational modification N6-acetyllysine; alternate. Lys258 is subject to N6-succinyllysine; alternate. N6-succinyllysine occurs at positions 261 and 263. Residues Ala275, Ala276, and Ala278 each contribute to the K(+) site. Residue Ser279 participates in CoA binding. Lys333 is modified (N6-acetyllysine). A K(+)-binding site is contributed by Val376. Residue Cys408 is the Proton donor/acceptor of the active site.

This sequence belongs to the thiolase-like superfamily. Thiolase family. Homotetramer. In terms of processing, succinylation at Lys-263, adjacent to a coenzyme A binding site. Desuccinylated by SIRT5.

The protein resides in the mitochondrion. The catalysed reaction is 2 acetyl-CoA = acetoacetyl-CoA + CoA. The enzyme catalyses propanoyl-CoA + acetyl-CoA = 2-methyl-3-oxobutanoyl-CoA + CoA. It participates in lipid metabolism; fatty acid beta-oxidation. Its activity is regulated as follows. Activated by potassium ions, but not sodium ions. Functionally, this is one of the enzymes that catalyzes the last step of the mitochondrial beta-oxidation pathway, an aerobic process breaking down fatty acids into acetyl-CoA. Using free coenzyme A/CoA, catalyzes the thiolytic cleavage of medium- to long-chain 3-oxoacyl-CoAs into acetyl-CoA and a fatty acyl-CoA shortened by two carbon atoms. The activity of the enzyme is reversible and it can also catalyze the condensation of two acetyl-CoA molecules into acetoacetyl-CoA. Thereby, it plays a major role in ketone body metabolism. The chain is Acetyl-CoA acetyltransferase, mitochondrial (ACAT1) from Bos taurus (Bovine).